A 162-amino-acid chain; its full sequence is MPSFDVVSEVDLMEVENAFNQARKEIAQRFDFKGTHTELERDKEQNVLIRAGSEGRAEAALQVLMEKLAKRGVALESLDPQKLEPASGGHVRQLVKLKRGLKIEDARKIVAKVKESGIKVQAAIQGEAVRVTGKKRDDLQAAIHAIRAAAFPIPLQFQNFRD.

Belongs to the YajQ family.

Its function is as follows. Nucleotide-binding protein. This chain is Nucleotide-binding protein A2cp1_0112, found in Anaeromyxobacter dehalogenans (strain 2CP-1 / ATCC BAA-258).